A 703-amino-acid polypeptide reads, in one-letter code: Arf-GAP with GTPase, ANK repeat and PH domain-containing protein 9 (703 aa).

Disordered regions lie at residues 249–287 (KRNG…TPTP), 299–323 (FTSE…TIGS), and 427–449 (SSTT…KHLK). Over residues 271-286 (QEDPQFSVPPTANTPT) the composition is skewed to polar residues. Residues 303–318 (KGSDPDKERKAPENHA) are compositionally biased toward basic and acidic residues. Residues 327–488 (IPIKQGMLLK…WVQAIQSQIL (162 aa)) form the PH domain. The 121-residue stretch at 509-629 (AMALQSIQNM…LFLAPLPCTE (121 aa)) folds into the Arf-GAP domain. Residues 524–547 (CVDCETQNPKWASLNLGVLMCIEC) form a C4-type zinc finger. One copy of the ANK repeat lies at 631–700 (SLGQQLLRAT…WTSWPEMPTG (70 aa)).

This sequence belongs to the centaurin gamma-like family.

Functionally, putative GTPase-activating protein. The chain is Arf-GAP with GTPase, ANK repeat and PH domain-containing protein 9 (AGAP9) from Homo sapiens (Human).